The primary structure comprises 372 residues: MKYDLIIIGSGSVGAAAGYYATRAGLKVLMTDAHMPPYQQGSHHGDTRLIRHAYGEGEKYVPLVLRAQTLWDELSTHNEEPIFVRSGVVNLGPADSAFLANVARSAQQWQLNVERLDATALMTRWPEIRVPDNYIGLFEADSGFLRSELAITTWLRLAREAGCAQLFNSPVSHIHHDDNGVTIETSEGCYHASKALISAGTWVKTLVPELPVQPVRKVFAWFKADGRYSTKNRFPAFTGEMPNGDHYYGFPAENDELKIGKHNGGQRIQAPEERKPFAAVASDGAEAFPFLRNVLPGIGGCLHGAACTYDNSPDEDFIIDTLPGHENTLVITGLSGHGFKFAPVLGEIAADFALGKTPSFDLTPFRLSRFSQ.

4-34 is an FAD binding site; it reads DLIIIGSGSVGAAAGYYATRAGLKVLMTDAH. At Cys307 the chain carries S-8alpha-FAD cysteine.

Belongs to the MSOX/MTOX family. MTOX subfamily. Monomer. FAD serves as cofactor.

The catalysed reaction is N(alpha)-methyl-L-tryptophan + O2 + H2O = L-tryptophan + formaldehyde + H2O2. Functionally, catalyzes the oxidative demethylation of N-methyl-L-tryptophan. This is N-methyl-L-tryptophan oxidase from Salmonella typhi.